Reading from the N-terminus, the 118-residue chain is V-type proton ATPase subunit G 2 (118 aa).

Residues 25–90 form a disordered region; that stretch reads ARKRKARRLK…VQGMQSSQQR (66 aa). Basic and acidic residues predominate over residues 35–56; it reads QAKEEAQMEVEQYRREREHEFQ. Composition is skewed to polar residues over residues 57–69 and 78–89; these read SKQQ…QGNL and RRQVQGMQSSQQ.

Belongs to the V-ATPase G subunit family. V-ATPase is a heteromultimeric enzyme made up of two complexes: the ATP-hydrolytic V1 complex and the proton translocation V0 complex. The V1 complex consists of three catalytic AB heterodimers that form a heterohexamer, three peripheral stalks each consisting of EG heterodimers, one central rotor including subunits D and F, and the regulatory subunits C and H. The proton translocation complex V0 consists of the proton transport subunit a, a ring of proteolipid subunits c9c'', rotary subunit d, subunits e and f, and the accessory subunits ATP6AP1/Ac45 and ATP6AP2/PRR. As to expression, brain.

Its subcellular location is the melanosome. It localises to the cytoplasmic vesicle. The protein resides in the clathrin-coated vesicle membrane. In terms of biological role, subunit of the V1 complex of vacuolar(H+)-ATPase (V-ATPase), a multisubunit enzyme composed of a peripheral complex (V1) that hydrolyzes ATP and a membrane integral complex (V0) that translocates protons. V-ATPase is responsible for acidifying and maintaining the pH of intracellular compartments and in some cell types, is targeted to the plasma membrane, where it is responsible for acidifying the extracellular environment. The protein is V-type proton ATPase subunit G 2 (ATP6V1G2) of Homo sapiens (Human).